Here is a 218-residue protein sequence, read N- to C-terminus: Glutathione S-transferase Mu 7 (218 aa).

The GST N-terminal domain occupies 2–88 (PMTLGYWDIR…YLGRKHNLCG (87 aa)). Glutathione-binding positions include 7–8 (YW), 46–50 (WLNEK), 59–60 (NL), and 72–73 (QS). In terms of domain architecture, GST C-terminal spans 90–208 (TEEERIRVDI…KSSRFLPRPL (119 aa)). Tyr-116 is a binding site for substrate.

This sequence belongs to the GST superfamily. Mu family. In terms of assembly, homodimer.

It is found in the cytoplasm. The catalysed reaction is RX + glutathione = an S-substituted glutathione + a halide anion + H(+). Conjugation of reduced glutathione to a wide number of exogenous and endogenous hydrophobic electrophiles. The protein is Glutathione S-transferase Mu 7 of Rattus norvegicus (Rat).